Here is a 487-residue protein sequence, read N- to C-terminus: Cytochrome P450 2C5 (487 aa).

Heme is bound at residue cysteine 432.

Belongs to the cytochrome P450 family. The cofactor is heme.

The protein resides in the endoplasmic reticulum membrane. Its subcellular location is the microsome membrane. It catalyses the reaction an organic molecule + reduced [NADPH--hemoprotein reductase] + O2 = an alcohol + oxidized [NADPH--hemoprotein reductase] + H2O + H(+). Its function is as follows. Cytochromes P450 are a group of heme-thiolate monooxygenases. In liver microsomes, this enzyme is involved in an NADPH-dependent electron transport pathway. It oxidizes a variety of structurally unrelated compounds, including steroids, fatty acids, and xenobiotics. The protein is Cytochrome P450 2C5 (CYP2C5) of Oryctolagus cuniculus (Rabbit).